Here is a 206-residue protein sequence, read N- to C-terminus: ATP-dependent dethiobiotin synthetase BioD (206 aa).

Residue 12 to 17 participates in ATP binding; it reads GVGKTI. Thr-16 lines the Mg(2+) pocket. Lys-32 is a catalytic residue. Positions 46 and 98 each coordinate Mg(2+). 98–101 provides a ligand contact to ATP; the sequence is EGAG.

Belongs to the dethiobiotin synthetase family. Homodimer. It depends on Mg(2+) as a cofactor.

The protein localises to the cytoplasm. The enzyme catalyses (7R,8S)-7,8-diammoniononanoate + CO2 + ATP = (4R,5S)-dethiobiotin + ADP + phosphate + 3 H(+). The protein operates within cofactor biosynthesis; biotin biosynthesis; biotin from 7,8-diaminononanoate: step 1/2. Its function is as follows. Catalyzes a mechanistically unusual reaction, the ATP-dependent insertion of CO2 between the N7 and N8 nitrogen atoms of 7,8-diaminopelargonic acid (DAPA, also called 7,8-diammoniononanoate) to form a ureido ring. The sequence is that of ATP-dependent dethiobiotin synthetase BioD from Novosphingobium aromaticivorans (strain ATCC 700278 / DSM 12444 / CCUG 56034 / CIP 105152 / NBRC 16084 / F199).